The sequence spans 161 residues: Protein-export protein SecB (161 aa).

Belongs to the SecB family. Homotetramer, a dimer of dimers. One homotetramer interacts with 1 SecA dimer.

The protein localises to the cytoplasm. One of the proteins required for the normal export of preproteins out of the cell cytoplasm. It is a molecular chaperone that binds to a subset of precursor proteins, maintaining them in a translocation-competent state. It also specifically binds to its receptor SecA. The protein is Protein-export protein SecB of Shewanella sp. (strain MR-7).